We begin with the raw amino-acid sequence, 795 residues long: Phenylalanine--tRNA ligase beta subunit (795 aa).

The tRNA-binding domain occupies 39-148 (AAEFNGVVIG…LDAPLGTDLR (110 aa)). A B5 domain is found at 401–476 (PKPAQILLRR…RIYGYNNIPN (76 aa)). 4 residues coordinate Mg(2+): Asp-454, Asp-460, Glu-463, and Glu-464. The 94-residue stretch at 701-794 (SKFPANRRDI…LKTEFNASLR (94 aa)) folds into the FDX-ACB domain.

This sequence belongs to the phenylalanyl-tRNA synthetase beta subunit family. Type 1 subfamily. Tetramer of two alpha and two beta subunits. The cofactor is Mg(2+).

It is found in the cytoplasm. It carries out the reaction tRNA(Phe) + L-phenylalanine + ATP = L-phenylalanyl-tRNA(Phe) + AMP + diphosphate + H(+). The chain is Phenylalanine--tRNA ligase beta subunit from Shewanella oneidensis (strain ATCC 700550 / JCM 31522 / CIP 106686 / LMG 19005 / NCIMB 14063 / MR-1).